The primary structure comprises 601 residues: Probable protein arginine N-methyltransferase 3 (601 aa).

Residues 1-10 are compositionally biased toward basic and acidic residues; the sequence is MAATMVKHEI. The interval 1–50 is disordered; that stretch reads MAATMVKHEILNYSEDEEENYSDEGDWGDWKADDNGIEGGEEEEEDDGDD. Acidic residues-rich tracts occupy residues 14-27 and 35-50; these read SEDE…EGDW and NGIE…DGDD. A C2H2-type zinc finger spans residues 57–78; sequence CLFCDSHFVSCDLLFEHCRLSH. One can recognise an SAM-dependent MTase PRMT-type domain in the interval 242-554; sequence NENYFGSYSS…NDRREAIGTE (313 aa). Residues arginine 264, glycine 288, glutamate 310, serine 312, valine 345, and glutamate 346 each coordinate S-adenosyl-L-homocysteine. Active-site residues include glutamate 365 and glutamate 374.

It belongs to the class I-like SAM-binding methyltransferase superfamily. Protein arginine N-methyltransferase family.

It is found in the cytoplasm. The protein localises to the cytosol. The catalysed reaction is L-arginyl-[protein] + S-adenosyl-L-methionine = N(omega)-methyl-L-arginyl-[protein] + S-adenosyl-L-homocysteine + H(+). It catalyses the reaction L-arginyl-[protein] + 2 S-adenosyl-L-methionine = N(omega),N(omega)-dimethyl-L-arginyl-[protein] + 2 S-adenosyl-L-homocysteine + 2 H(+). In terms of biological role, protein-arginine N-methyltransferase that catalyzes both the monomethylation and asymmetric dimethylation of the guanidino nitrogens of arginine residues in target proteins, and therefore falls into the group of type I methyltransferases. The polypeptide is Probable protein arginine N-methyltransferase 3 (PRMT3) (Arabidopsis thaliana (Mouse-ear cress)).